The chain runs to 525 residues: Glutamate--cysteine ligase (525 aa).

This sequence belongs to the glutamate--cysteine ligase type 1 family. Type 1 subfamily.

It carries out the reaction L-cysteine + L-glutamate + ATP = gamma-L-glutamyl-L-cysteine + ADP + phosphate + H(+). The protein operates within sulfur metabolism; glutathione biosynthesis; glutathione from L-cysteine and L-glutamate: step 1/2. The sequence is that of Glutamate--cysteine ligase from Pseudoalteromonas translucida (strain TAC 125).